The chain runs to 228 residues: Translin (228 aa).

Positions 86–90 (RFHEH) are DNA/RNA binding. Positions 177–198 (LDSGFRLLNLKNDSLRKRYDGL) are leucine-zipper. Lysine 187 carries the N6-acetyllysine modification. Serine 190 bears the Phosphoserine mark. Lysine 199 is subject to N6-acetyllysine.

This sequence belongs to the translin family. In terms of assembly, ring-shaped heterooctamer of six TSN and two TSNAX subunits, DNA/RNA binding occurs inside the ring.

It localises to the cytoplasm. Its subcellular location is the nucleus. Functionally, DNA-binding protein that specifically recognizes consensus sequences at the breakpoint junctions in chromosomal translocations, mostly involving immunoglobulin (Ig)/T-cell receptor gene segments. Seems to recognize single-stranded DNA ends generated by staggered breaks occurring at recombination hot spots. Its function is as follows. Exhibits both single-stranded and double-stranded endoribonuclease activity. May act as an activator of RNA-induced silencing complex (RISC) by facilitating endonucleolytic cleavage of the siRNA passenger strand. This chain is Translin, found in Homo sapiens (Human).